A 315-amino-acid polypeptide reads, in one-letter code: 4-hydroxy-3-methylbut-2-enyl diphosphate reductase (315 aa).

Residue Cys-12 participates in [4Fe-4S] cluster binding. Residues His-43 and His-81 each coordinate (2E)-4-hydroxy-3-methylbut-2-enyl diphosphate. Residues His-43 and His-81 each contribute to the dimethylallyl diphosphate site. Residues His-43 and His-81 each coordinate isopentenyl diphosphate. Cys-103 provides a ligand contact to [4Fe-4S] cluster. His-131 provides a ligand contact to (2E)-4-hydroxy-3-methylbut-2-enyl diphosphate. Dimethylallyl diphosphate is bound at residue His-131. His-131 provides a ligand contact to isopentenyl diphosphate. Glu-133 functions as the Proton donor in the catalytic mechanism. Position 170 (Thr-170) interacts with (2E)-4-hydroxy-3-methylbut-2-enyl diphosphate. A [4Fe-4S] cluster-binding site is contributed by Cys-198. 3 residues coordinate (2E)-4-hydroxy-3-methylbut-2-enyl diphosphate: Ser-226, Asn-228, and Ser-271. Ser-226, Asn-228, and Ser-271 together coordinate dimethylallyl diphosphate. Residues Ser-226, Asn-228, and Ser-271 each contribute to the isopentenyl diphosphate site.

Belongs to the IspH family. Requires [4Fe-4S] cluster as cofactor.

The enzyme catalyses isopentenyl diphosphate + 2 oxidized [2Fe-2S]-[ferredoxin] + H2O = (2E)-4-hydroxy-3-methylbut-2-enyl diphosphate + 2 reduced [2Fe-2S]-[ferredoxin] + 2 H(+). The catalysed reaction is dimethylallyl diphosphate + 2 oxidized [2Fe-2S]-[ferredoxin] + H2O = (2E)-4-hydroxy-3-methylbut-2-enyl diphosphate + 2 reduced [2Fe-2S]-[ferredoxin] + 2 H(+). The protein operates within isoprenoid biosynthesis; dimethylallyl diphosphate biosynthesis; dimethylallyl diphosphate from (2E)-4-hydroxy-3-methylbutenyl diphosphate: step 1/1. It participates in isoprenoid biosynthesis; isopentenyl diphosphate biosynthesis via DXP pathway; isopentenyl diphosphate from 1-deoxy-D-xylulose 5-phosphate: step 6/6. In terms of biological role, catalyzes the conversion of 1-hydroxy-2-methyl-2-(E)-butenyl 4-diphosphate (HMBPP) into a mixture of isopentenyl diphosphate (IPP) and dimethylallyl diphosphate (DMAPP). Acts in the terminal step of the DOXP/MEP pathway for isoprenoid precursor biosynthesis. This is 4-hydroxy-3-methylbut-2-enyl diphosphate reductase from Bacillus cytotoxicus (strain DSM 22905 / CIP 110041 / 391-98 / NVH 391-98).